The sequence spans 134 residues: Cytochrome c-type biogenesis protein CcmE (134 aa).

At 1–7 (MKRKYRR) the chain is on the cytoplasmic side. The chain crosses the membrane as a helical; Signal-anchor for type II membrane protein span at residues 8 to 28 (LFVVIITLSIFAGSVVFVLGK). Over 29 to 134 (LKNNVSFFYT…MPNKYKTNNL (106 aa)) the chain is Periplasmic. His120 and Tyr124 together coordinate heme.

The protein belongs to the CcmE/CycJ family.

It localises to the cell inner membrane. Functionally, heme chaperone required for the biogenesis of c-type cytochromes. Transiently binds heme delivered by CcmC and transfers the heme to apo-cytochromes in a process facilitated by CcmF and CcmH. This is Cytochrome c-type biogenesis protein CcmE from Ehrlichia ruminantium (strain Gardel).